The sequence spans 80 residues: Putative ATP-dependent Clp protease proteolytic subunit (80 aa).

H19 is an active-site residue.

Belongs to the peptidase S14 family. As to quaternary structure, component of the chloroplastic Clp protease core complex.

The protein resides in the plastid. The protein localises to the chloroplast. It catalyses the reaction Hydrolysis of proteins to small peptides in the presence of ATP and magnesium. alpha-casein is the usual test substrate. In the absence of ATP, only oligopeptides shorter than five residues are hydrolyzed (such as succinyl-Leu-Tyr-|-NHMec, and Leu-Tyr-Leu-|-Tyr-Trp, in which cleavage of the -Tyr-|-Leu- and -Tyr-|-Trp bonds also occurs).. Cleaves peptides in various proteins in a process that requires ATP hydrolysis. Has a chymotrypsin-like activity. Plays a major role in the degradation of misfolded proteins. The protein is Putative ATP-dependent Clp protease proteolytic subunit of Pinus strobus (Eastern white pine).